A 256-amino-acid chain; its full sequence is Protein FixA (256 aa).

This sequence belongs to the ETF beta-subunit/FixA family. As to quaternary structure, heterodimer of FixA and FixB.

It participates in amine and polyamine metabolism; carnitine metabolism. In terms of biological role, required for anaerobic carnitine reduction. May bring reductant to CaiA. This Salmonella paratyphi A (strain ATCC 9150 / SARB42) protein is Protein FixA.